The primary structure comprises 347 residues: N-acetyl-gamma-glutamyl-phosphate reductase (347 aa).

Residue cysteine 151 is part of the active site.

The protein belongs to the NAGSA dehydrogenase family. Type 1 subfamily.

The protein resides in the cytoplasm. The enzyme catalyses N-acetyl-L-glutamate 5-semialdehyde + phosphate + NADP(+) = N-acetyl-L-glutamyl 5-phosphate + NADPH + H(+). The protein operates within amino-acid biosynthesis; L-arginine biosynthesis; N(2)-acetyl-L-ornithine from L-glutamate: step 3/4. Catalyzes the NADPH-dependent reduction of N-acetyl-5-glutamyl phosphate to yield N-acetyl-L-glutamate 5-semialdehyde. This is N-acetyl-gamma-glutamyl-phosphate reductase from Corynebacterium aurimucosum (strain ATCC 700975 / DSM 44827 / CIP 107346 / CN-1) (Corynebacterium nigricans).